We begin with the raw amino-acid sequence, 122 residues long: uncharacterized protein (122 aa).

The chain crosses the membrane as a helical span at residues 9 to 25 (AFPSPVFLGGVFFVFFF).

Its subcellular location is the cytoplasm. The protein resides in the nucleus. The protein localises to the membrane. This is an uncharacterized protein from Saccharomyces cerevisiae (strain ATCC 204508 / S288c) (Baker's yeast).